The following is a 342-amino-acid chain: Polycomb group RING finger protein 2 (342 aa).

The RING-type zinc-finger motif lies at 18 to 57 (CALCGGYFIDATTIVECLHSFCKTCIVRYLETNKYCPMCD). Glycyl lysine isopeptide (Lys-Gly) (interchain with G-Cter in SUMO2) cross-links involve residues Lys-51 and Lys-88. Positions 81–95 (KLVPGLFKDEMKRRR) match the Nuclear localization signal motif. At Thr-237 the chain carries Phosphothreonine; by PKA. The interval 237 to 342 (TLPTVPTPSE…MTVNGAPCPP (106 aa)) is disordered. A compositionally biased stretch (polar residues) spans 243 to 253 (TPSEGTNTSGA). The span at 263–318 (APSPATLPATSSSLPSPATPSHGSPSSHGPPATHPTSPTPPSTAAGTTTATNGGTS) shows a compositional bias: low complexity. Positions 319–328 (NCLQTPSSTS) are enriched in polar residues. Thr-334 is subject to Phosphothreonine; by PKA.

Exists as both a monomer and homodimer. Component of a PRC1-like complex. Interacts with CBX8, RING1 and RNF2. Interacts with CBX7. Interacts with PHC2. Post-translationally, phosphorylated. Homodimer formation is regulated by phosphorylation with only unphosphorylated proteins forming homodimers. Expressed in embryonic stem cells. Expressed in a variety of tumor cells and in neural tissues.

The protein localises to the nucleus. Transcriptional repressor. Binds specifically to the DNA sequence 5'-GACTNGACT-3'. Has tumor suppressor activity. May play a role in control of cell proliferation and/or neural cell development. Regulates proliferation of early T progenitor cells by maintaining expression of HES1. Also plays a role in antero-posterior specification of the axial skeleton and negative regulation of the self-renewal activity of hematopoietic stem cells. Component of a Polycomb group (PcG) multiprotein PRC1-like complex, a complex class required to maintain the transcriptionally repressive state of many genes, including Hox genes, throughout development. PcG PRC1 complex acts via chromatin remodeling and modification of histones; it mediates monoubiquitination of histone H2A 'Lys-119', rendering chromatin heritably changed in its expressibility. Within the PRC1-like complex, regulates RNF2 ubiquitin ligase activity. This is Polycomb group RING finger protein 2 (Pcgf2) from Mus musculus (Mouse).